A 105-amino-acid polypeptide reads, in one-letter code: Small ribosomal subunit protein eS24 (105 aa).

It belongs to the eukaryotic ribosomal protein eS24 family.

The sequence is that of Small ribosomal subunit protein eS24 from Ignicoccus hospitalis (strain KIN4/I / DSM 18386 / JCM 14125).